We begin with the raw amino-acid sequence, 60 residues long: Large ribosomal subunit protein bL32 (60 aa).

Residues 1–20 (MAVQKSRKSRSRRDMRRSHH) are compositionally biased toward basic residues. A disordered region spans residues 1 to 22 (MAVQKSRKSRSRRDMRRSHHRM).

This sequence belongs to the bacterial ribosomal protein bL32 family.

In Psychrobacter arcticus (strain DSM 17307 / VKM B-2377 / 273-4), this protein is Large ribosomal subunit protein bL32.